The sequence spans 160 residues: Transcriptional repressor NrdR (160 aa).

A zinc finger spans residues 3–34; the sequence is CPYCQYEDTQVKDSRPAEEGAVIRRRRVCSVC. An ATP-cone domain is found at 49 to 139; it reads LLITKKNGRC…VYRDFRNASD (91 aa).

It belongs to the NrdR family. Zn(2+) serves as cofactor.

Its function is as follows. Negatively regulates transcription of bacterial ribonucleotide reductase nrd genes and operons by binding to NrdR-boxes. In Bartonella tribocorum (strain CIP 105476 / IBS 506), this protein is Transcriptional repressor NrdR.